The primary structure comprises 274 residues: Cytochrome b-c1 complex subunit Rieske, mitochondrial (274 aa).

Topologically, residues 79 to 103 are mitochondrial matrix; that stretch reads SHTDVKVPDFSEYRRPEVLDSTKSS. Residues 104–140 form a helical membrane-spanning segment; it reads RESSEARKGFSYLVTAVTTVGVAYAAKNAVTQFVSSM. Over 141–274 the chain is Mitochondrial intermembrane; sequence SASADVLALA…FTSDDMVIVG (134 aa). The region spanning 187 to 272 is the Rieske domain; that stretch reads EAAVELSQLR…YEFTSDDMVI (86 aa). 5 residues coordinate [2Fe-2S] cluster: Cys217, His219, Cys236, His239, and Ser241. The cysteines at positions 222 and 238 are disulfide-linked.

It belongs to the Rieske iron-sulfur protein family. Component of the ubiquinol-cytochrome c oxidoreductase (cytochrome b-c1 complex, complex III, CIII), a multisubunit enzyme composed of 11 subunits. The complex is composed of 3 respiratory subunits cytochrome b, cytochrome c1 and Rieske protein UQCRFS1, 2 core protein subunits UQCRC1/QCR1 and UQCRC2/QCR2, and 6 low-molecular weight protein subunits UQCRH/QCR6, UQCRB/QCR7, UQCRQ/QCR8, UQCR10/QCR9, UQCR11/QCR10 and subunit 9, the cleavage product of Rieske protein UQCRFS1. The complex exists as an obligatory dimer and forms supercomplexes (SCs) in the inner mitochondrial membrane with NADH-ubiquinone oxidoreductase (complex I, CI) and cytochrome c oxidase (complex IV, CIV), resulting in different assemblies (supercomplex SCI(1)III(2)IV(1) and megacomplex MCI(2)III(2)IV(2)). Incorporation of the Rieske protein UQCRFS1 is the penultimate step in complex III assembly. Interacts with TTC19, which is involved in the clearance of UQCRFS1 fragments. As to quaternary structure, component of the ubiquinol-cytochrome c oxidoreductase (cytochrome b-c1 complex, complex III, CIII). Subunit 9 corresponds to the mitochondrial targeting sequence (MTS) of Rieske protein UQCRFS1. It is retained after processing and incorporated inside complex III, where it remains bound to the complex and localizes between the 2 core subunits UQCRC1/QCR1 and UQCRC2/QCR2. It depends on [2Fe-2S] cluster as a cofactor. In terms of processing, proteolytic processing is necessary for the correct insertion of UQCRFS1 in the complex III dimer. Several fragments are generated during UQCRFS1 insertion, most probably due to the endogenous matrix-processing peptidase (MPP) activity of the 2 core protein subunits UQCRC1/QCR1 and UQCRC2/QCR2, which are homologous to the 2 mitochondrial-processing peptidase (MPP) subunits beta-MPP and alpha-MPP respectively. The action of the protease is also necessary for the clearance of the UQCRFS1 fragments.

Its subcellular location is the mitochondrion inner membrane. It carries out the reaction a quinol + 2 Fe(III)-[cytochrome c](out) = a quinone + 2 Fe(II)-[cytochrome c](out) + 2 H(+)(out). Functionally, component of the ubiquinol-cytochrome c oxidoreductase, a multisubunit transmembrane complex that is part of the mitochondrial electron transport chain which drives oxidative phosphorylation. The respiratory chain contains 3 multisubunit complexes succinate dehydrogenase (complex II, CII), ubiquinol-cytochrome c oxidoreductase (cytochrome b-c1 complex, complex III, CIII) and cytochrome c oxidase (complex IV, CIV), that cooperate to transfer electrons derived from NADH and succinate to molecular oxygen, creating an electrochemical gradient over the inner membrane that drives transmembrane transport and the ATP synthase. The cytochrome b-c1 complex catalyzes electron transfer from ubiquinol to cytochrome c, linking this redox reaction to translocation of protons across the mitochondrial inner membrane, with protons being carried across the membrane as hydrogens on the quinol. In the process called Q cycle, 2 protons are consumed from the matrix, 4 protons are released into the intermembrane space and 2 electrons are passed to cytochrome c. The Rieske protein is a catalytic core subunit containing a [2Fe-2S] iron-sulfur cluster. It cycles between 2 conformational states during catalysis to transfer electrons from the quinol bound in the Q(0) site in cytochrome b to cytochrome c1. Incorporation of UQCRFS1 is the penultimate step in complex III assembly. In terms of biological role, component of the ubiquinol-cytochrome c oxidoreductase (cytochrome b-c1 complex, complex III, CIII). UQCRFS1 undergoes proteolytic processing once it is incorporated in the complex III dimer. One of the fragments, called subunit 9, corresponds to its mitochondrial targeting sequence (MTS). The proteolytic processing is necessary for the correct insertion of UQCRFS1 in the complex III dimer, but the persistence of UQCRFS1-derived fragments may prevent newly imported UQCRFS1 to be processed and assembled into complex III and is detrimental for the complex III structure and function. This Symphalangus syndactylus (Siamang) protein is Cytochrome b-c1 complex subunit Rieske, mitochondrial (UQCRFS1).